Here is a 186-residue protein sequence, read N- to C-terminus: Secreted chorismate mutase (186 aa).

Positions 1–30 are cleaved as a signal peptide; the sequence is MQPTHTLTRLTVIGKLIIASSFFLSLAVQA. In terms of domain architecture, Chorismate mutase spans 31–107; that stretch reads QQCGQTAPLI…AAKAIQYRYR (77 aa). C33 and C148 are oxidised to a cystine. Residues R43, K54, D63, 99–103, and R127 each bind substrate; that span reads AKAIQ.

As to quaternary structure, homodimer.

The protein resides in the periplasm. It catalyses the reaction chorismate = prephenate. It participates in metabolic intermediate biosynthesis; prephenate biosynthesis; prephenate from chorismate: step 1/1. Catalyzes the Claisen rearrangement of chorismate to prephenate. May play some role in the pathogenicity. This Yersinia pestis protein is Secreted chorismate mutase (pheA2).